A 116-amino-acid polypeptide reads, in one-letter code: ANWCEPGLVIPLNPLPSCRTYMVRRACGVSIGPVVPLPVLKERCCSELEKLVPYCRCGALRTALDSMMTGYEMRPTCSWGGLLTFAPTIVCYRECNLRTLHGRPFCYALGAEGTTT.

5 disulfide bridges follow: Cys4/Cys55, Cys18/Cys44, Cys27/Cys77, Cys45/Cys95, and Cys57/Cys106.

This sequence belongs to the protease inhibitor I6 (cereal trypsin/alpha-amylase inhibitor) family.

It localises to the secreted. Functionally, alpha-amylase inhibitor. This chain is Alpha-amylase inhibitor 5, found in Sorghum bicolor (Sorghum).